The chain runs to 96 residues: Mitochondrial import inner membrane translocase subunit Tim13-B (96 aa).

Positions 47-70 (CFRKCIGKPGGSLDNSEQKCVAMC) match the Twin CX3C motif motif. 2 disulfide bridges follow: Cys47-Cys70 and Cys51-Cys66.

This sequence belongs to the small Tim family. In terms of assembly, heterohexamer; composed of 3 copies of TIMM8 (TIMM8A or TIMM8B) and 3 copies of TIMM13, named soluble 70 kDa complex. Associates with the TIM22 complex, whose core is composed of TIMM22.

The protein resides in the mitochondrion inner membrane. Its function is as follows. Mitochondrial intermembrane chaperone that participates in the import and insertion of some multi-pass transmembrane proteins into the mitochondrial inner membrane. Also required for the transfer of beta-barrel precursors from the TOM complex to the sorting and assembly machinery (SAM complex) of the outer membrane. Acts as a chaperone-like protein that protects the hydrophobic precursors from aggregation and guide them through the mitochondrial intermembrane space. The TIMM8-TIMM13 complex mediates the import of some proteins while the predominant TIMM9-TIMM10 70 kDa complex mediates the import of much more proteins. The chain is Mitochondrial import inner membrane translocase subunit Tim13-B (timm13-b) from Xenopus laevis (African clawed frog).